The following is a 35-amino-acid chain: U1-theraphotoxin-Hhn1a (35 aa).

3 disulfide bridges follow: Cys-2/Cys-16, Cys-9/Cys-21, and Cys-15/Cys-28.

The protein belongs to the neurotoxin 10 (Hwtx-1) family. 24 (Hwtx-6) subfamily. Expressed by the venom gland.

The protein localises to the secreted. In terms of biological role, gating-modifier toxin that dose-dependently inhibits inactivation of voltage-gated sodium channels and reduces the peak of sodium current in cockroach DUM neurons. In vivo, reversibly paralyzes cockroaches for several hours, paralyzes rat after intracerebroventricular injection and blocks the neuromuscular transmission of the isolated rat phrenic nerve-diaphragm preparation. This Cyriopagopus hainanus (Chinese bird spider) protein is U1-theraphotoxin-Hhn1a.